The sequence spans 371 residues: Putative RING finger protein ORF117 (371 aa).

The segment at Cys72–Asn108 adopts an RING-type zinc-finger fold. Residues Glu178–Val192 are compositionally biased toward acidic residues. A disordered region spans residues Glu178–Pro218.

The polypeptide is Putative RING finger protein ORF117 (Magallana gigas (Pacific oyster)).